The primary structure comprises 46 residues: Mu-segestritoxin-Sf1b (46 aa).

Intrachain disulfides connect C3–C19, C10–C22, C18–C42, and C24–C40. The keys region for toxin activity stretch occupies residues 31 to 33; the sequence is RPW.

This sequence belongs to the neurotoxin 16 (SFI) family. As to expression, expressed by the venom gland.

The protein resides in the secreted. In terms of biological role, insecticidal toxin. Causes flaccid paralysis followed by death when injected into Heliothis virescens larvae. Does not induce any toxic effects when injected intravenously into adult mice at a dose of 1.25 mg/kg body weight. This Segestria florentina (Tube-web spider) protein is Mu-segestritoxin-Sf1b.